The primary structure comprises 165 residues: IQSTSMDQGSLSEDSMNSFIRTLIQAGIWKNKVLRQTARTMDGIETTXKXTXAEPXVIAXKDIRLGFQSIVSVDAELLRQQRRFSSPRVLXNENTPLEPPPLYLMEEPMVLTXTSXXXRFAXXXXHRGEYSVCDSESRWVTDKSSAVDIRGHQVTVLGEIRMGPS.

A signal peptide spans 1-3 (IQS). A propeptide spanning residues 4-119 (TSMDQGSLSE…VLTXTSXXXR (116 aa)) is cleaved from the precursor.

Belongs to the NGF-beta family.

It localises to the secreted. In terms of biological role, seems to promote the survival of visceral and proprioceptive sensory neurons. This Tropidophis haetianus (Haitian dwarf boa) protein is Neurotrophin-3 (NTF3).